A 474-amino-acid polypeptide reads, in one-letter code: MADLWDDIYNDTKLLEELAPIAIDAALLQGVLMRTKESPNSSDVVSFAPFALLPSPVPKALFEQAKCVQEDFNTLVDRISQDTSFLEQVLSSTIKVDDFIRRLFAIHKQVQQEDCTQEVFLGINRSDYMFDCRDDGTPALKQIEINTIAASFGGLASRTPAVHQHVLKFLRKSEESSSILTNDAVEGIGWGIAHAWALYGSVDATVMFLVENEQRNILDQRFIEAELCKRNVRVIRRRLADVFERGTLDEERHLFIDGYEVAVAYFRTGYVPQDYTEQDWEARLMLERSRAVKCPDVPTQLVGTKKVQQELSRPQILEKFLPDKPEAVARIRETFTGLYSLDIGEEGDEAVRVALANPDQFVLKPQREGGGNNLYGEELKEKLQECKDSEERTSYILMDKINPKPLKNCLLRAGGRVQISECISELGMFGVYVRHRDQMIYYDQVGHLLRTKAIEHSDGGVAAGVAVLDNPYLV.

R125 is a binding site for substrate. ATP is bound at residue E144. 2 residues coordinate Mg(2+): E144 and N146. Residues 148–151, 214–216, Q220, and 267–270 contribute to the substrate site; these read IAAS, QRN, and RTGY. Residues K305, 364–373, Y375, 398–401, and E425 contribute to the ATP site; these read KPQREGGGNN and MDKI. Residue E368 participates in Mg(2+) binding. R450 contributes to the substrate binding site. ATP contacts are provided by K452 and D458. Substrate is bound at residue 461 to 462; it reads VA.

This sequence belongs to the eukaryotic GSH synthase family. In terms of assembly, homodimer. It depends on Mg(2+) as a cofactor. As to expression, expressed ubiquitously.

It catalyses the reaction gamma-L-glutamyl-L-cysteine + glycine + ATP = glutathione + ADP + phosphate + H(+). The catalysed reaction is gamma-L-glutamyl-(2S)-2-aminobutanoate + glycine + ATP = ophthalmate + ADP + phosphate + H(+). It participates in sulfur metabolism; glutathione biosynthesis; glutathione from L-cysteine and L-glutamate: step 2/2. Catalyzes the production of glutathione from gamma-glutamylcysteine and glycine in an ATP-dependent manner. Glutathione (gamma-glutamylcysteinylglycine, GSH) is the most abundant intracellular thiol in living aerobic cells and is required for numerous processes including the protection of cells against oxidative damage, amino acid transport, the detoxification of foreign compounds, the maintenance of protein sulfhydryl groups in a reduced state and acts as a cofactor for a number of enzymes. Participates in ophthalmate biosynthesis in hepatocytes. The polypeptide is Glutathione synthetase (Xenopus laevis (African clawed frog)).